Consider the following 164-residue polypeptide: MTRKQRRLLMIGGAGVVLVVAVGLVLNAMRGSIVFFSTPKMVSEQQIGAGTRFRLGGVVEPGSLHRGDQLAVSFKVSDGAATVPVAFKGILPDLFREGQGVIAEGALDTAGVFKADTVLAKHDETYMPKEVADALKKQGHWKDDYEKKPPGAPGASADAAGPSR.

Topologically, residues 1–7 are cytoplasmic; sequence MTRKQRR. The chain crosses the membrane as a helical; Signal-anchor for type II membrane protein span at residues 8–28; sequence LLMIGGAGVVLVVAVGLVLNA. At 29–164 the chain is on the periplasmic side; the sequence is MRGSIVFFST…ASADAAGPSR (136 aa). The heme site is built by His122 and Tyr126. Basic and acidic residues predominate over residues 137–149; the sequence is KQGHWKDDYEKKP. Residues 137–164 form a disordered region; the sequence is KQGHWKDDYEKKPPGAPGASADAAGPSR. The span at 153-164 shows a compositional bias: low complexity; that stretch reads PGASADAAGPSR.

It belongs to the CcmE/CycJ family.

Its subcellular location is the cell inner membrane. Its function is as follows. Heme chaperone required for the biogenesis of c-type cytochromes. Transiently binds heme delivered by CcmC and transfers the heme to apo-cytochromes in a process facilitated by CcmF and CcmH. In Rhodopseudomonas palustris (strain BisB5), this protein is Cytochrome c-type biogenesis protein CcmE.